A 359-amino-acid polypeptide reads, in one-letter code: 4-hydroxyproline 2-epimerase (359 aa).

Cys126 serves as the catalytic Proton acceptor. Substrate contacts are provided by residues 127-128, His248, and Asp274; that span reads GH. Cys278 serves as the catalytic Proton donor. 279–280 is a binding site for substrate; that stretch reads GT.

The protein belongs to the proline racemase family.

It carries out the reaction trans-4-hydroxy-L-proline = cis-4-hydroxy-D-proline. Functionally, catalyzes the epimerization of trans-4-hydroxy-L-proline (t4LHyp) to cis-4-hydroxy-D-proline (c4DHyp). Is likely involved in a degradation pathway that converts t4LHyp to alpha-ketoglutarate. Displays no proline racemase activity. The polypeptide is 4-hydroxyproline 2-epimerase (Planctopirus limnophila (strain ATCC 43296 / DSM 3776 / IFAM 1008 / Mu 290) (Planctomyces limnophilus)).